Reading from the N-terminus, the 412-residue chain is Imidazolonepropionase (412 aa).

Positions 76 and 78 each coordinate Fe(3+). Residues His76 and His78 each contribute to the Zn(2+) site. Residues Arg85, Tyr148, and His181 each coordinate 4-imidazolone-5-propanoate. Tyr148 is a binding site for N-formimidoyl-L-glutamate. His242 is a Fe(3+) binding site. His242 is a binding site for Zn(2+). Glu245 is a 4-imidazolone-5-propanoate binding site. Position 317 (Asp317) interacts with Fe(3+). Zn(2+) is bound at residue Asp317. Residues Asn319 and Gly321 each coordinate N-formimidoyl-L-glutamate. Position 322 (Ser322) interacts with 4-imidazolone-5-propanoate.

It belongs to the metallo-dependent hydrolases superfamily. HutI family. Zn(2+) serves as cofactor. Fe(3+) is required as a cofactor.

It localises to the cytoplasm. The catalysed reaction is 4-imidazolone-5-propanoate + H2O = N-formimidoyl-L-glutamate. The protein operates within amino-acid degradation; L-histidine degradation into L-glutamate; N-formimidoyl-L-glutamate from L-histidine: step 3/3. Functionally, catalyzes the hydrolytic cleavage of the carbon-nitrogen bond in imidazolone-5-propanoate to yield N-formimidoyl-L-glutamate. It is the third step in the universal histidine degradation pathway. This is Imidazolonepropionase from Staphylococcus aureus (strain MSSA476).